The following is a 715-amino-acid chain: Bromodomain-containing protein DDB_G0278469 (715 aa).

Disordered regions lie at residues 18–46 (EDNNNNNNNNNNKENINNDDNNINPNRNA) and 186–425 (QQQK…ETKQ). Low complexity-rich tracts occupy residues 20–45 (NNNNNNNNNNKENINNDDNNINPNRN), 186–204 (QQQKQQQQQQQQQQAPTAQ), 215–227 (LTAATTTPTTTTT), 234–254 (TAPPTTVASSSTIPKTTTTKK), and 261–281 (SKSNLKSSQNKLSTTTTTTIT). A compositionally biased stretch (basic and acidic residues) spans 307–316 (KPKEQKKDIM). Positions 322 to 368 (SKKANTHEEKEEGESEEEEEEEEEEEEEEEEEEEEEQLEDKQKQTKT) form a coiled coil. Positions 332–359 (EEGESEEEEEEEEEEEEEEEEEEEEEQL) are enriched in acidic residues. The span at 366 to 389 (TKTPISQNKSASSNIKPLSKTSKS) shows a compositional bias: polar residues. Positions 405-414 (KKITSTTVTR) are enriched in low complexity. Residues 437–470 (KQQTQEEIEQELKLESIRKRIEQFINKFEKEIND) are a coiled coil. The region spanning 474 to 599 (KDLDEGKRKI…IQFYKSLLET (126 aa)) is the Bromo domain. The interval 653–715 (LVDEDEDECL…SEEEDQEATN (63 aa)) is disordered. Residues 662–672 (LNNQNNPTTYD) are compositionally biased toward polar residues. The segment covering 684-715 (QESDEESDEESDEESDEERDQLSEEEDQEATN) has biased composition (acidic residues).

The protein is Bromodomain-containing protein DDB_G0278469 of Dictyostelium discoideum (Social amoeba).